We begin with the raw amino-acid sequence, 532 residues long: MSDLLTDELGQAFQITDEDKGCRIKGQQCILANIGVVRSIATFLSTSLGPTGMDKILQSKDEDIVVTNDGATILKEMEMTENPISRLIVQLSESQDEEIGDGTTSVVVLASALLDQAQALLGQGVHPIKISEGFEVGLGHAVEHLSEISEEISDLKETMMKAAKTSLGSKIVYKSLERFAEICTDAVLMVADMERKDLDFELINIESKVGRDLSSTALIKGIVINKEFSHPQMKKEVKDGRIALLSCPFEPPKLKTKHSLVISNPKEYKELEEYEKKKFAEMIESIKRSGSNIVMCQWGFDDEANSLLMENGLPAVRWVGGHELELLAVHTGGSIVARFEDLEESDLGKARVREESLGTENDKIIVVENEGCSKAVTILVRGANDLVIEEAKRSIRDALCAVRNILTNSRIVYGGGSSEMSCSLALERIATGYSGEEREAILGFGRALEEIPLCLARNSGHDPIGYSSDLRKLQMESKNFHLGVDCLGDGEQDMKKLGVFDALSSKIRQFQMATQLVTMVLKIDNVVSDFHD.

It belongs to the TCP-1 chaperonin family. As to quaternary structure, component of the T-complex protein 1 (TCP1) complex.

Its subcellular location is the cytoplasm. Functionally, molecular chaperone; assists the folding of proteins upon ATP hydrolysis. The polypeptide is T-complex protein 1 subunit epsilon (CCT5) (Encephalitozoon cuniculi (strain GB-M1) (Microsporidian parasite)).